The sequence spans 269 residues: Integral membrane protein 2C (269 aa).

Phosphothreonine is present on Thr-39. Residues Val-57–Ala-77 traverse the membrane as a helical; Signal-anchor for type II membrane protein segment. One can recognise a BRICHOS domain in the interval Phe-138 to Leu-232. The cysteines at positions 165 and 224 are disulfide-linked. Asn-171 carries N-linked (GlcNAc...) asparagine glycosylation.

This sequence belongs to the ITM2 family. In terms of assembly, interacts with BACE1. Interacts with APP. Interacts with STMN2. Type I membrane-bound, as well as soluble, furin has a pre-eminent role in ITM2C proteolytic processing. PCSK7 and PCSK5 may also be involved although to a lesser extent. The soluble form of PCSK7 is incapable of processing ITM2C. Fails to undergo shedding by ADAM10 and intramembrane cleavage by SPPL2B.

It is found in the lysosome membrane. The protein resides in the cell membrane. In terms of biological role, negative regulator of amyloid-beta peptide production. May inhibit the processing of APP by blocking its access to alpha- and beta-secretase. Binding to the beta-secretase-cleaved APP C-terminal fragment is negligible, suggesting that ITM2C is a poor gamma-secretase cleavage inhibitor. May play a role in TNF-induced cell death and neuronal differentiation. The chain is Integral membrane protein 2C (Itm2c) from Rattus norvegicus (Rat).